Here is a 1947-residue protein sequence, read N- to C-terminus: Sodium channel protein type 3 subunit alpha (1947 aa).

The Cytoplasmic portion of the chain corresponds to 1 to 128 (MAQALLVPPG…KIAIKILVHS (128 aa)). The interval 28-60 (RAAEEKAKKPKKEQDIDDENKPKPNSDLEAGKN) is disordered. The span at 46-57 (ENKPKPNSDLEA) shows a compositional bias: basic and acidic residues. One copy of the I repeat lies at 110–455 (ILTPLNPVRK…QQMLEQLKKQ (346 aa)). A helical membrane pass occupies residues 129-146 (LFSMLIMCTILTNCVFMT). Topologically, residues 147–152 (LSNPPD) are extracellular. A helical membrane pass occupies residues 153–174 (WTKNVEYTFTGIYTFESLIKIL). Topologically, residues 175 to 188 (ARGFCLEDFTFLRD) are cytoplasmic. A helical transmembrane segment spans residues 189–206 (PWNWLDFSVIVMAYVTEF). The Extracellular portion of the chain corresponds to 207–213 (VDLGNVS). An N-linked (GlcNAc...) asparagine glycan is attached at N211. The chain crosses the membrane as a helical span at residues 214 to 235 (ALRTFRVLRALKTISVIPGLKT). Over 236–249 (IVGALIQSVKKLSD) the chain is Cytoplasmic. The helical transmembrane segment at 250 to 269 (VMILTVFCLSVFALIGLQLF) threads the bilayer. The Extracellular segment spans residues 270-369 (MGNLRNKCLQ…NYGYTSFDTF (100 aa)). Residues N290, N296, N302, N307, and N339 are each glycosylated (N-linked (GlcNAc...) asparagine). Residues 370–386 (SWAFLSLFRLMTQDYWE) constitute an intramembrane region (pore-forming). Over 387–397 (NLYQLTLRAAG) the chain is Extracellular. The chain crosses the membrane as a helical span at residues 398 to 424 (KTYMIFFVLVIFLGSFYLVNLILAVVA). Residues 425 to 712 (MAYEEQNQAT…LVNLIVMDPF (288 aa)) are Cytoplasmic-facing. Residues S484, S485, and S486 each carry the phosphoserine modification. Disordered stretches follow at residues 493 to 529 (SKSAKEWRNRRKKRRQREHLEGNHRPEGDRFPKSESE) and 587 to 632 (VGSE…ETEV). Over residues 500 to 509 (RNRRKKRRQR) the composition is skewed to basic residues. Composition is skewed to basic and acidic residues over residues 510–529 (EHLEGNHRPEGDRFPKSESE) and 596–622 (DEHSTFEDSESRRDSLFVPHRPGERRN). An II repeat occupies 693 to 965 (CCDSWLKVKH…QIAVGRMQKG (273 aa)). Residues 713 to 730 (VDLAITICIVLNTLFMAM) form a helical membrane-spanning segment. Over 731-738 (EHYPMTEQ) the chain is Extracellular. The helical transmembrane segment at 739 to 763 (FSSVLTVGNLVFTGIFTAEMVLKII) threads the bilayer. Over 764-773 (AMDPYYYFQE) the chain is Cytoplasmic. A helical membrane pass occupies residues 774-793 (GWNIFDGIIVSLSLMELGLA). Over 794 to 797 (NVEG) the chain is Extracellular. A helical transmembrane segment spans residues 798-816 (LSVLRSFRLLRVFKLAKSW). Residues 817 to 834 (PTLNMLIKIIGNSVGALG) are Cytoplasmic-facing. The helical transmembrane segment at 835–855 (NLTLVLAIIVFIFAVVGMQLF) threads the bilayer. Over 856 to 880 (GKSYKECVCKINEDCKLPRWHMNDF) the chain is Extracellular. C864 and C870 are disulfide-bonded. Positions 881 to 896 (FHSFLIVFRVLCGEWI) form an intramembrane region, pore-forming. At 897 to 907 (ETMWDCMEVAG) the chain is on the extracellular side. Cysteines 902 and 911 form a disulfide. A helical transmembrane segment spans residues 908-934 (QTMCLIVFMLVMVIGNLVVLNLFLALL). Residues 935–1157 (LSSFSSDNLA…RKTCYSIVEH (223 aa)) lie on the Cytoplasmic side of the membrane. The interval 1070–1113 (EEFSSESELEESKEKLNATSSSEGSTVDVAPPREGEQAEIEPEE) is disordered. The III repeat unit spans residues 1140–1451 (KGKIWWNLRK…KKYYNAMKKL (312 aa)). Residues 1158–1178 (NWFETFIVFMILLSSGALAFE) form a helical membrane-spanning segment. Over 1179–1190 (DIYIEQRKTIKT) the chain is Extracellular. A helical membrane pass occupies residues 1191–1212 (MLEYADKVFTYIFILEMLLKWV). Residues 1213 to 1218 (AYGFQT) lie on the Cytoplasmic side of the membrane. A helical transmembrane segment spans residues 1219-1244 (YFTNAWCWLDFLIVDVSLVSLVANAL). The Extracellular portion of the chain corresponds to 1245 to 1253 (GYSELGAIK). A helical membrane pass occupies residues 1254-1272 (SLRTLRALRPLRALSRFEG). Residues 1273 to 1285 (MRVVVNALVGAIP) lie on the Cytoplasmic side of the membrane. A helical transmembrane segment spans residues 1286–1308 (SIMNVLLVCLIFWLIFSIMGVNL). Residues 1309 to 1354 (FAGKFYHCVNMTTGSMFDMSEVNNFSDCQALGKQARWKNVKVNFDN) lie on the Extracellular side of the membrane. C1316 and C1336 form a disulfide bridge. N-linked (GlcNAc...) asparagine glycans are attached at residues N1318 and N1332. Positions 1355-1371 (VGAGYLALLQVATFKGW) form an intramembrane region, pore-forming. At 1372 to 1394 (MDIMYAAVDSRDVKLQPVYEENL) the chain is on the extracellular side. Residues 1395–1420 (YMYLYFVIFIIFGSFFTLNLFIGVII) form a helical membrane-spanning segment. The Cytoplasmic segment spans residues 1421–1478 (DNFNQQKKKFGGQDIFMTEEQKKYYNAMKKLGSKKPQKPIPRPANKFQGMVFDFVTRQ). S1453 bears the Phosphoserine mark. The IV repeat unit spans residues 1460 to 1758 (IPRPANKFQG…WEKFDPDATQ (299 aa)). The helical transmembrane segment at 1479-1497 (VFDISIMILICLNMVTMMV) threads the bilayer. At 1498–1505 (ETDDQSKY) the chain is on the extracellular side. A helical membrane pass occupies residues 1506–1529 (MTLVLSRINLVFIVLFTGEFLLKL). Residues 1530-1539 (ISLRYYYFTI) lie on the Cytoplasmic side of the membrane. A helical membrane pass occupies residues 1540-1557 (GWNIFDFVVVILSIVGMF). Residues 1558–1569 (LAELIEKYFVSP) are Extracellular-facing. The helical transmembrane segment at 1570–1592 (TLFRVIRLARIGRILRLIKGAKG) threads the bilayer. Residues 1593–1605 (IRTLLFALMMSLP) are Cytoplasmic-facing. Residues 1606-1629 (ALFNIGLLLFLVMFIYAIFGMSNF) form a helical membrane-spanning segment. The Extracellular segment spans residues 1630 to 1651 (AYVKKEAGIDDMFNFETFGNSM). The pore-forming intramembrane region spans 1652 to 1664 (ICLFQITTSAGWD). The Extracellular portion of the chain corresponds to 1665 to 1696 (GLLAPILNSAPPDCDPDAIHPGSSVKGDCGNP). A helical transmembrane segment spans residues 1697–1722 (SVGIFFFVSYIIISFLVVVNMYIAVI). At 1723–1947 (LENFSVATEE…PEKESKGKEV (225 aa)) the chain is on the cytoplasmic side. Positions 1852–1881 (EEVSAAIIQRNYRCYLLKQRLKNISNTYDK) constitute an IQ domain. Residues 1901–1947 (LNGNSTPEKTDGSSSTTSPPSYDSVTKPDKEKFEKDKPEKESKGKEV) are disordered. Over residues 1926-1947 (TKPDKEKFEKDKPEKESKGKEV) the composition is skewed to basic and acidic residues.

This sequence belongs to the sodium channel (TC 1.A.1.10) family. Nav1.3/SCN3A subfamily. Heterooligomer of an alpha subunit, SCN3A, and 1 to 3 regulatory beta subunits including SCN1B and SCN2B; disulfide-linked with some beta subunits like SCN2B. Interacts with NEDD4L; could regulate expression of SCN3A at the plasma membrane through ubiquitination-regulated endocytosis. In terms of processing, may be ubiquitinated by NEDD4L; which would promote its endocytosis. Post-translationally, phosphorylation at Ser-1453 in a highly conserved cytoplasmic loop slows inactivation of the channel and reduces peak sodium currents. In terms of tissue distribution, expressed in enterochromaffin cells in both colon and small bowel (at protein level). Expressed in pancreatic alpha and beta cells.

Its subcellular location is the cell membrane. The protein localises to the basal cell membrane. It carries out the reaction Na(+)(in) = Na(+)(out). Pore-forming subunit of Nav1.3, a voltage-gated sodium (Nav) channel that directly mediates the depolarizing phase of action potentials in excitable membranes. Navs, also called VGSCs (voltage-gated sodium channels) or VDSCs (voltage-dependent sodium channels), operate by switching between closed and open conformations depending on the voltage difference across the membrane. In the open conformation they allow Na(+) ions to selectively pass through the pore, along their electrochemical gradient. The influx of Na+ ions provokes membrane depolarization, initiating the propagation of electrical signals throughout cells and tissues. In some secretory cell types, it also participates in cell excitability through membrane depolarization and regulates cells responsiveness to stimuli triggering secretion. For instance, it controls the release of serotonin/5-hydroxytryptamine by enterochromaffin cells and is required for both glucagon- and glucose-induced insulin secretion in pancreatic endocrine cells. In Mus musculus (Mouse), this protein is Sodium channel protein type 3 subunit alpha.